We begin with the raw amino-acid sequence, 428 residues long: 3-phosphoshikimate 1-carboxyvinyltransferase (428 aa).

3-phosphoshikimate-binding residues include K20, S21, and R25. Position 20 (K20) interacts with phosphoenolpyruvate. The phosphoenolpyruvate site is built by G92 and R120. Residues S166, Q168, D314, and K341 each contribute to the 3-phosphoshikimate site. Q168 is a phosphoenolpyruvate binding site. The active-site Proton acceptor is D314. Residues R345 and R387 each contribute to the phosphoenolpyruvate site.

Belongs to the EPSP synthase family. As to quaternary structure, monomer.

The protein localises to the cytoplasm. The catalysed reaction is 3-phosphoshikimate + phosphoenolpyruvate = 5-O-(1-carboxyvinyl)-3-phosphoshikimate + phosphate. Its pathway is metabolic intermediate biosynthesis; chorismate biosynthesis; chorismate from D-erythrose 4-phosphate and phosphoenolpyruvate: step 6/7. In terms of biological role, catalyzes the transfer of the enolpyruvyl moiety of phosphoenolpyruvate (PEP) to the 5-hydroxyl of shikimate-3-phosphate (S3P) to produce enolpyruvyl shikimate-3-phosphate and inorganic phosphate. The protein is 3-phosphoshikimate 1-carboxyvinyltransferase of Listeria monocytogenes serotype 4a (strain HCC23).